The chain runs to 25 residues: Retinol-binding protein 3 (25 aa).

The protein localises to the secreted. The protein resides in the extracellular space. It is found in the extracellular matrix. It localises to the interphotoreceptor matrix. Its function is as follows. IRBP shuttles 11-cis and all trans retinoids between the retinol isomerase in the pigment epithelium and the visual pigments in the photoreceptor cells of the retina. The protein is Retinol-binding protein 3 (RBP3) of Sus scrofa (Pig).